Consider the following 492-residue polypeptide: Glutamyl-tRNA(Gln) amidotransferase subunit A (492 aa).

Active-site charge relay system residues include K78 and S158. The Acyl-ester intermediate role is filled by S182.

It belongs to the amidase family. GatA subfamily. In terms of assembly, heterotrimer of A, B and C subunits.

The catalysed reaction is L-glutamyl-tRNA(Gln) + L-glutamine + ATP + H2O = L-glutaminyl-tRNA(Gln) + L-glutamate + ADP + phosphate + H(+). Allows the formation of correctly charged Gln-tRNA(Gln) through the transamidation of misacylated Glu-tRNA(Gln) in organisms which lack glutaminyl-tRNA synthetase. The reaction takes place in the presence of glutamine and ATP through an activated gamma-phospho-Glu-tRNA(Gln). The chain is Glutamyl-tRNA(Gln) amidotransferase subunit A from Zymomonas mobilis subsp. mobilis (strain ATCC 31821 / ZM4 / CP4).